The sequence spans 216 residues: UPF0502 protein VC0395_0676/VC395_A0574 (216 aa).

It belongs to the UPF0502 family.

The chain is UPF0502 protein VC0395_0676/VC395_A0574 from Vibrio cholerae serotype O1 (strain ATCC 39541 / Classical Ogawa 395 / O395).